The sequence spans 106 residues: uncharacterized protein (106 aa).

This is an uncharacterized protein from Sinorhizobium fredii (strain NBRC 101917 / NGR234).